Consider the following 850-residue polypeptide: cAMP-inducible prespore protein D7 (850 aa).

Residues 1 to 24 (MYSKKYTSFVIVLILSCIISTCTS) form the signal peptide. Positions 119–130 (QNNNIGSSIGDS) are enriched in low complexity. Disordered regions lie at residues 119–167 (QNNN…SKTT) and 787–850 (DAEL…QNQK). Over residues 131–143 (TGASTSPQFQSIN) the composition is skewed to polar residues. The span at 144–154 (GLSGASQSSGS) shows a compositional bias: low complexity. Over residues 787–798 (DAELAKNNKQEN) the composition is skewed to basic and acidic residues. Residues 801–820 (ENLVQEKQQSPDQIKNQLKN) are compositionally biased toward polar residues. Residues 837-850 (EKNQQLLEQEQNQK) show a composition bias toward low complexity.

The chain is cAMP-inducible prespore protein D7 (D7) from Dictyostelium discoideum (Social amoeba).